A 163-amino-acid chain; its full sequence is Peptidyl-prolyl cis-trans isomerase FKBP15-2 (163 aa).

The first 25 residues, 1-25, serve as a signal peptide directing secretion; the sequence is MASKMSLRYSLFLIFFSLISLQGFA. The PPIase FKBP-type domain maps to 52 to 140; the sequence is GDTIKVHYRG…IFDTELIAVN (89 aa). A disordered region spans residues 142–163; the sequence is KPAGGEEYGGDEDDEGYGNDEL. Acidic residues predominate over residues 149–163; the sequence is YGGDEDDEGYGNDEL. Residues 160 to 163 carry the Prevents secretion from ER motif; that stretch reads NDEL.

The protein belongs to the FKBP-type PPIase family.

It localises to the endoplasmic reticulum lumen. The catalysed reaction is [protein]-peptidylproline (omega=180) = [protein]-peptidylproline (omega=0). In terms of biological role, PPIases accelerate the folding of proteins. It catalyzes the cis-trans isomerization of proline imidic peptide bonds in oligopeptides. This Arabidopsis thaliana (Mouse-ear cress) protein is Peptidyl-prolyl cis-trans isomerase FKBP15-2 (FKBP15-2).